A 931-amino-acid polypeptide reads, in one-letter code: Mitochondrial cox1 translation regulator ppr4 (931 aa).

A mitochondrion-targeting transit peptide spans 1–16 (MSKSFAYRHIWCFWRF). 7 PPR repeats span residues 247-277 (NEVL…MYRT), 282-316 (SFTA…RPKI), 429-461 (HLLN…KIKV), 462-496 (DERT…GIKT), 497-531 (SNQA…GITE), 598-632 (NVVH…GKAP), and 683-713 (PPSL…YLEY).

As to quaternary structure, component of the MRH5C complex, composed of mrh5, ppr4, mtf2, and sls1. Proteins mtf2 and sls1 form a subcomplex that serves as a scaffold to bring mrh5 and ppr4 together. The MRH5C complex associates with the small subunit of the mitochondrial ribosome.

It is found in the mitochondrion. Functionally, RNA-binding translation activation factor that as part of the MRH5C complex specifically recruits cox1 mRNA to the mitochondrial ribosome for translation initiation. This Schizosaccharomyces pombe (strain 972 / ATCC 24843) (Fission yeast) protein is Mitochondrial cox1 translation regulator ppr4.